Here is a 197-residue protein sequence, read N- to C-terminus: dCTP deaminase (197 aa).

105–110 (RSSIAR) is a binding site for dCTP. Glu133 (proton donor/acceptor) is an active-site residue. DCTP-binding residues include Tyr166 and Gln177. The disordered stretch occupies residues 172-197 (NKYAGQKDPKPSRLAEELSLEQLRGR). Residues 176–187 (GQKDPKPSRLAE) are compositionally biased toward basic and acidic residues.

Belongs to the dCTP deaminase family. Homotrimer.

The catalysed reaction is dCTP + H2O + H(+) = dUTP + NH4(+). It functions in the pathway pyrimidine metabolism; dUMP biosynthesis; dUMP from dCTP (dUTP route): step 1/2. Its function is as follows. Catalyzes the deamination of dCTP to dUTP. The polypeptide is dCTP deaminase (Thermomicrobium roseum (strain ATCC 27502 / DSM 5159 / P-2)).